Here is an 867-residue protein sequence, read N- to C-terminus: E3 ubiquitin-protein ligase SH3RF1 (867 aa).

An RING-type zinc finger spans residues 12–53 (CPVCLERLDATAKVLPCQHTFCRRCLLGIVGSRGELRCPECR). The tract at residues 101–127 (AQGAGGSQRDPGPTGGQSQRVQAKSTP) is disordered. Residues 116–125 (GQSQRVQAKS) show a composition bias toward polar residues. SH3 domains are found at residues 132–191 (PQLP…VIKP) and 194–257 (QPPP…FNSA). The disordered stretch occupies residues 265-328 (DKPSEGGGDS…PPPQRHSMEI (64 aa)). Residues 275–285 (SEGPSSSSSGP) are compositionally biased toward low complexity. Positions 436–497 (QRPTVYVAMF…PGNYMSPVSR (62 aa)) constitute an SH3 3 domain. Residues 706–794 (LSNKKKLRPS…APIAPPPRQP (89 aa)) are disordered. Residues 760–769 (SELSMSSSSS) are compositionally biased toward low complexity. Residues 770-784 (NTDAVTHRSSPQDNT) show a composition bias toward polar residues. One can recognise an SH3 4 domain in the interval 808–867 (IVCERYRVVVSYPPQSEAELELKEGDIVFVHKKREDGWFKGTLQRNGRTGLFPGSFVDSI).

The protein belongs to the SH3RF family. Autoubiquitinated. Ubiquitinated by SH3RF2, leading to proteasome-mediated degradation.

Its subcellular location is the cytoplasm. The protein localises to the perinuclear region. The protein resides in the cell projection. It localises to the lamellipodium. It is found in the golgi apparatus. Its subcellular location is the trans-Golgi network. The catalysed reaction is S-ubiquitinyl-[E2 ubiquitin-conjugating enzyme]-L-cysteine + [acceptor protein]-L-lysine = [E2 ubiquitin-conjugating enzyme]-L-cysteine + N(6)-ubiquitinyl-[acceptor protein]-L-lysine.. It participates in protein modification; protein ubiquitination. In terms of biological role, has E3 ubiquitin-protein ligase activity. In the absence of an external substrate, it can catalyze self-ubiquitination. Acts as a scaffold protein that contributes to the effective activation of the JNK signaling pathway. The protein is E3 ubiquitin-protein ligase SH3RF1 (sh3rf1) of Danio rerio (Zebrafish).